A 30-amino-acid chain; its full sequence is Hementerin (30 aa).

Requires Ca(2+) as cofactor.

It localises to the secreted. With respect to regulation, fibrino(geno)lytic activity inhibited by EDTA but not by PMSF, E-64, 6-AHA and aprotinin. Functionally, cleaves fibrinogen Aalpha (FGA), gamma (FGG) and Bbeta (FGB) chains. Degrades cross-linked fibrin. Has no amidolytic, plasminogenolytic or caseinolytic activity. Inhibits platelet aggregation induced by collagen (IC(50)=7.5ug/ml) and various other agonists, presumably via activation of a nitridergic pathway. Inhibition is accompanied by reduced ATP release from and surface expression of SELP and CD63 on platelets as well as increased intracellular levels of Ca(2+), cGMP and nitric oxide synthase activity. In Haementeria depressa (Leech), this protein is Hementerin.